A 356-amino-acid chain; its full sequence is WAT1-related protein At1g68170 (356 aa).

A run of 10 helical transmembrane segments spans residues 4 to 24 (ITAM…FKLA), 33 to 53 (VLVA…CFIF), 65 to 85 (LMLL…ILTI), 94 to 114 (TFTS…AALL), 125 to 145 (VGLA…VFIF), 176 to 196 (ISIL…LWFL), 210 to 230 (WNAT…ALCW), 245 to 265 (LLTI…VNAW), 273 to 293 (LFVS…GSFL), and 298 to 318 (LHLG…IVLW). EamA domains lie at 14–142 (TAGL…GALV) and 191–317 (ISLW…YIVL).

It belongs to the drug/metabolite transporter (DMT) superfamily. Plant drug/metabolite exporter (P-DME) (TC 2.A.7.4) family.

It is found in the membrane. This chain is WAT1-related protein At1g68170, found in Arabidopsis thaliana (Mouse-ear cress).